Reading from the N-terminus, the 160-residue chain is Small ribosomal subunit protein uS7 (160 aa).

This sequence belongs to the universal ribosomal protein uS7 family. In terms of assembly, part of the 30S ribosomal subunit. Contacts proteins S9 and S11.

Functionally, one of the primary rRNA binding proteins, it binds directly to 16S rRNA where it nucleates assembly of the head domain of the 30S subunit. Is located at the subunit interface close to the decoding center, probably blocks exit of the E-site tRNA. The chain is Small ribosomal subunit protein uS7 from Rickettsia massiliae (strain Mtu5).